A 131-amino-acid chain; its full sequence is Synaptobrevin-like protein (131 aa).

Residues 1–81 (MLHITTMTDK…KRKFWWKNCK (81 aa)) are Cytoplasmic-facing. One can recognise a v-SNARE coiled-coil homology domain in the interval 18–78 (RLQQTQAQVN…GKLKRKFWWK (61 aa)). The chain crosses the membrane as a helical; Anchor for type IV membrane protein span at residues 82–102 (MLAVLGVLVVILIIVLIVWVV). Over 103-131 (SEQKNKVEQSEHSSHHLVMDNSSHLLSEQ) the chain is Vesicular. The interval 112-131 (SEHSSHHLVMDNSSHLLSEQ) is disordered. The segment covering 122–131 (DNSSHLLSEQ) has biased composition (polar residues).

Belongs to the synaptobrevin family.

Its subcellular location is the cytoplasmic vesicle. It localises to the secretory vesicle. The protein resides in the synaptic vesicle membrane. It is found in the synapse. The protein localises to the synaptosome. Functionally, unknown, but synaptobrevins are presumed to be involved in targeting and fusion of synaptic vesicles with the presynaptic membrane as well as in neurotransmitter release. The chain is Synaptobrevin-like protein from Schistosoma mansoni (Blood fluke).